The chain runs to 189 residues: Ribonuclease M5 2 (189 aa).

Residues 8–91 (SQVIVAEGRD…VFLKRDEAVP (84 aa)) form the Toprim domain. 3 residues coordinate Mg(2+): glutamate 14, aspartate 60, and aspartate 62.

Belongs to the ribonuclease M5 family. Mg(2+) is required as a cofactor.

The protein resides in the cytoplasm. It catalyses the reaction Endonucleolytic cleavage of RNA, removing 21 and 42 nucleotides, respectively, from the 5'- and 3'-termini of a 5S-rRNA precursor.. In terms of biological role, required for correct processing of both the 5' and 3' ends of 5S rRNA precursor. Cleaves both sides of a double-stranded region yielding mature 5S rRNA in one step. The protein is Ribonuclease M5 2 of Ligilactobacillus salivarius (strain UCC118) (Lactobacillus salivarius).